The following is a 300-amino-acid chain: Glycine--tRNA ligase alpha subunit (300 aa).

This sequence belongs to the class-II aminoacyl-tRNA synthetase family. In terms of assembly, tetramer of two alpha and two beta subunits.

Its subcellular location is the cytoplasm. It catalyses the reaction tRNA(Gly) + glycine + ATP = glycyl-tRNA(Gly) + AMP + diphosphate. This Buchnera aphidicola subsp. Baizongia pistaciae (strain Bp) protein is Glycine--tRNA ligase alpha subunit (glyQ).